The chain runs to 940 residues: Receptor-like protein 9b (940 aa).

The first 28 residues, 1–28 (MLMMFSPAFVMVMDLMVLVMMIMMMVSS), serve as a signal peptide directing secretion. Topologically, residues 29 to 895 (LDAHGHISCI…GDEETTIDME (867 aa)) are extracellular. Asparagine 53, asparagine 63, asparagine 66, asparagine 101, asparagine 115, and asparagine 151 each carry an N-linked (GlcNAc...) asparagine glycan. LRR repeat units follow at residues 108 to 136 (FGELQTLNLSNFWCQGWFDHIHGYKSFER), 137 to 163 (LKNLEILDISENGVNNTVLPFINTASS), 165 to 185 (KTLILHGNNMEGTFPMKELIN), 186 to 211 (LRNLELLDLSKNQFVGPVPDLANFHN), 213 to 232 (QGLDMSDNKFSGSNKGLCQL), 233 to 255 (KNLRELDLSQNKFTGQFPQCFDS), 257 to 279 (TQLQVLDISSNNFNGTVPSLIRN), 281 to 304 (DSVEYLALSDNEFKGFFSLELIAN), 306 to 330 (SKLKVFKLSSRSNLLRLKKLSSLQP), 331 to 354 (KFQLSVIELQNCNLENVPSFIQHQ), 355 to 378 (KDLHVINLSNNKLTGVFPYWLLEK), 379 to 402 (YPNLRVLLLQNNSLTMLELPRLLN), 403 to 426 (HTLQILDLSANNFDQRLPENIGKV), 427 to 450 (LPNIRHLNLSNNGFQWILPSSFGE), 452 to 475 (KDIKFLDLSHNNFSGSLPMKFLIG), and 477 to 502 (SSLHTLKLSYNKFFGQIFPKQTNFGS). 2 N-linked (GlcNAc...) asparagine glycosylation sites follow: asparagine 270 and asparagine 304. Asparagine 361, asparagine 389, and asparagine 402 each carry an N-linked (GlcNAc...) asparagine glycan. N-linked (GlcNAc...) asparagine glycans are attached at residues asparagine 434 and asparagine 463. The LRR 17; degenerate repeat unit spans residues 503-522 (LVVLIANNNLFTGIADGLRN). LRR repeat units follow at residues 523–546 (VQSLGVLDLSNNYLQGVIPSWFGG), 547–570 (FFFAYLFLSNNLLEGTLPSTLFSK), 571–593 (PTFKILDLSGNKFSGNLPSHFTG), 595–615 (DMSLLYLNDNEFSGTIPSTLI), 616–639 (KDVLVLDLRNNKLSGTIPHFVKNE), 641–662 (ILSLLLRGNTLTGHIPTDLCGL), 663–686 (RSIRILDLANNRLKGSIPTCLNNV), 752–776 (FNFMFGLDLSSNELSGDIPKELGDL), 777–799 (QRIRALNLSHNSLSGLIPQSFSN), 801–824 (TDIESIDLSFNLLRGPIPQDLSKL), and 826–849 (YMVVFNVSYNNLSGSIPSHGKFST). A glycan (N-linked (GlcNAc...) asparagine) is linked at asparagine 685. 2 N-linked (GlcNAc...) asparagine glycosylation sites follow: asparagine 783 and asparagine 799. Asparagine 831, asparagine 836, asparagine 867, and asparagine 873 each carry an N-linked (GlcNAc...) asparagine glycan. Residues 896-916 (IFYWSLAATYGVTWITFIVFL) traverse the membrane as a helical segment. Residues 917-940 (CFDSPWRRVWFHFVDAFISLFKCV) are Cytoplasmic-facing.

The protein belongs to the RLP family.

Its subcellular location is the cell membrane. The sequence is that of Receptor-like protein 9b from Arabidopsis thaliana (Mouse-ear cress).